The primary structure comprises 448 residues: Cyclic dof factor 3 (448 aa).

The disordered stretch occupies residues 26-108 (AVTVEDDEED…DGKTLKKPTK (83 aa)). The span at 29–39 (VEDDEEDDWSG) shows a compositional bias: acidic residues. The segment covering 40–54 (GDDKSPEKVTPELSD) has biased composition (basic and acidic residues). Low complexity predominate over residues 55-69 (KNNNNCNDNSFNNSK). Positions 80-99 (STDQIESSDTPEDNQQTTPD) are enriched in polar residues. A Dof-type zinc finger spans residues 110-164 (LPCPRCKSMETKFCYYNNYNINQPRHFCKACQRYWTAGGTMRNVPVGAGRRKNKS). Positions 112, 115, 137, and 140 each coordinate Zn(2+). Disordered regions lie at residues 243–269 (NGDD…AQSG) and 332–370 (SSSP…KQKA). Composition is skewed to polar residues over residues 246-259 (DCSS…SNNH) and 332-347 (SSSP…NSPT). Positions 351-368 (HPRDEGSSKKDNETERKQ) are enriched in basic and acidic residues.

Interacts with ADO2 (via kelch repeats) and ADO3 (via kelch repeats). Expressed in the vasculature of cotyledons and hypocotyls, leaves and roots.

It localises to the nucleus. Transcription factor that binds specifically to a 5'-AA[AG]G-3' consensus core sequence. Regulates a photoperiodic flowering response. Transcriptional repressor of 'CONSTANS' expression. The polypeptide is Cyclic dof factor 3 (CDF3) (Arabidopsis thaliana (Mouse-ear cress)).